The primary structure comprises 444 residues: Protein CPn_0808/CP_1063/CPj0808/CpB0837 (444 aa).

The segment covering 1–13 (MTSGVSGSSSQDP) has biased composition (polar residues). The disordered stretch occupies residues 1 to 124 (MTSGVSGSSS…NNYDSPSLPT (124 aa)). The segment covering 15-24 (LAAQLAQSSQ) has biased composition (low complexity). Over residues 25 to 42 (KAGNAQSGHDTKNVTKQG) the composition is skewed to polar residues. Residues 77–86 (SKGEKSEKSG) show a composition bias toward basic and acidic residues. Residues 88–103 (SKSSTSVASASETATA) show a composition bias toward low complexity. Positions 113–124 (RQNNYDSPSLPT) are enriched in polar residues.

This sequence belongs to the chlamydial CPn_0808/CT_579/TC_0868 family.

The polypeptide is Protein CPn_0808/CP_1063/CPj0808/CpB0837 (Chlamydia pneumoniae (Chlamydophila pneumoniae)).